Consider the following 572-residue polypeptide: Phosphoglucomutase-1 (572 aa).

Substrate contacts are provided by residues threonine 23, arginine 27, 120-121 (SH), and lysine 133. The Phosphoserine intermediate role is filled by serine 120. Mg(2+) is bound at residue serine 120. Residues aspartate 288, aspartate 290, and aspartate 292 each contribute to the Mg(2+) site. Substrate-binding positions include 292 to 293 (DR), threonine 356, 375 to 377 (EES), lysine 388, and arginine 524.

The protein belongs to the phosphohexose mutase family. Mg(2+) is required as a cofactor.

The protein resides in the cytoplasm. The catalysed reaction is alpha-D-glucose 1-phosphate = alpha-D-glucose 6-phosphate. Functionally, this enzyme participates in both the breakdown and synthesis of glucose. The chain is Phosphoglucomutase-1 (pgmA) from Dictyostelium discoideum (Social amoeba).